The primary structure comprises 116 residues: Large ribosomal subunit protein uL18 (116 aa).

This sequence belongs to the universal ribosomal protein uL18 family. In terms of assembly, part of the 50S ribosomal subunit; part of the 5S rRNA/L5/L18/L25 subcomplex. Contacts the 5S and 23S rRNAs.

Its function is as follows. This is one of the proteins that bind and probably mediate the attachment of the 5S RNA into the large ribosomal subunit, where it forms part of the central protuberance. In Chromohalobacter salexigens (strain ATCC BAA-138 / DSM 3043 / CIP 106854 / NCIMB 13768 / 1H11), this protein is Large ribosomal subunit protein uL18.